A 119-amino-acid chain; its full sequence is MORF4 family associated protein 1 like 2 (119 aa).

Positions 1-16 (MRPVDADEAREPREEP) are enriched in basic and acidic residues. The segment at 1-36 (MRPVDADEAREPREEPGSPLSPAPRAGRENLASLER) is disordered.

It belongs to the MORF4 family-associated protein family. In terms of assembly, may interact with CDK2AP1.

May play a role in cell proliferation. The protein is MORF4 family associated protein 1 like 2 of Homo sapiens (Human).